Reading from the N-terminus, the 545-residue chain is Cannabidiolic acid synthase-like 1 (545 aa).

An N-terminal signal peptide occupies residues 1 to 28 (MKCSTFCFWYVCKIIFFFLSFNIQISIA). A disulfide bridge links cysteine 37 with cysteine 99. Residues asparagine 45, asparagine 65, asparagine 89, and asparagine 168 are each glycosylated (N-linked (GlcNAc...) asparagine). The 175-residue stretch at 77–251 (TTPKPLVIIT…AAWKIRLVAV (175 aa)) folds into the FAD-binding PCMH-type domain. The segment at residues 114 to 176 (HDAEGMSYIS…ENLSFPAGYC (63 aa)) is a cross-link (6-(S-cysteinyl)-8alpha-(pros-histidyl)-FAD (His-Cys)). Substrate is bound at residue histidine 292. Residues asparagine 297, asparagine 305, asparagine 329, and asparagine 361 are each glycosylated (N-linked (GlcNAc...) asparagine). Tyrosine 417 serves as a coordination point for substrate. N-linked (GlcNAc...) asparagine glycosylation occurs at asparagine 467. The Proton acceptor role is filled by tyrosine 484. N-linked (GlcNAc...) asparagine glycosylation is present at asparagine 499.

The protein belongs to the oxygen-dependent FAD-linked oxidoreductase family. FAD serves as cofactor. Post-translationally, the FAD cofactor is bound via a bicovalent 6-S-cysteinyl, 8alpha-N1-histidyl FAD linkage.

The protein localises to the secreted. Its function is as follows. Has no cannabidiolic acid synthase activity. This Cannabis sativa (Hemp) protein is Cannabidiolic acid synthase-like 1 (CBDAS2).